A 290-amino-acid chain; its full sequence is MNGKIIKGIGGFYYIKTDQGLIECKARGKFRHKDIKPMVGDDVTIKMEHGKGVIEEIHERKSELVRPTVANVSLAFVVFAVKNPDINFDLLNKFLILCEYNNIEVIVCLNKIDLVSEEEREEIKKRINVIGYEVLFINAKKGIGIERLEEKIRGNITVFCGPSGAGKSTLINKLSNKEHMETGNVSVKLGRGKHTTRHSELIEVADGYIVDTPGFSTLEIKDLMDKNSLKYCFPEFTQYNDKCKYRGCLHYKEPNCALKEAVESEKINRYRYEFYVRALEEIIEEEKNKW.

The 158-residue stretch at Lys61–Leu218 folds into the CP-type G domain. GTP is bound by residues Asn110–Asp113 and Gly161–Thr169. Residues Cys243, Cys248, His250, and Cys256 each coordinate Zn(2+).

This sequence belongs to the TRAFAC class YlqF/YawG GTPase family. RsgA subfamily. In terms of assembly, monomer. Associates with 30S ribosomal subunit, binds 16S rRNA. The cofactor is Zn(2+).

It is found in the cytoplasm. Functionally, one of several proteins that assist in the late maturation steps of the functional core of the 30S ribosomal subunit. Helps release RbfA from mature subunits. May play a role in the assembly of ribosomal proteins into the subunit. Circularly permuted GTPase that catalyzes slow GTP hydrolysis, GTPase activity is stimulated by the 30S ribosomal subunit. The polypeptide is Small ribosomal subunit biogenesis GTPase RsgA (Clostridium beijerinckii (strain ATCC 51743 / NCIMB 8052) (Clostridium acetobutylicum)).